The sequence spans 218 residues: Glutathione S-transferase Mu 2 (218 aa).

One can recognise a GST N-terminal domain in the interval 2–88 (PMTLGYWNIR…YIARKHNLCG (87 aa)). Residue 7–8 (YW) coordinates glutathione. Ser-27 and Ser-44 each carry phosphoserine. Glutathione contacts are provided by residues 43-46 (RSQW), Lys-50, 59-60 (NL), and 72-73 (QS). Residues 90–208 (SEKEQIREDI…KSSRFLPRPV (119 aa)) form the GST C-terminal domain. Tyr-116 serves as a coordination point for substrate.

The protein belongs to the GST superfamily. Mu family. Homodimer. In terms of tissue distribution, muscle.

Its subcellular location is the cytoplasm. It catalyses the reaction RX + glutathione = an S-substituted glutathione + a halide anion + H(+). The enzyme catalyses 11(S)-hydroxy-14(S),15(S)-epoxy-(5Z,8Z,12E)-eicosatrienoate + glutathione = (11S,15S)-dihydroxy-14(R)-S-glutathionyl-(5Z,8Z,12E)-eicosatrienoate. Conjugation of reduced glutathione to a wide number of exogenous and endogenous hydrophobic electrophiles. Participates in the formation of novel hepoxilin regioisomers. This chain is Glutathione S-transferase Mu 2, found in Homo sapiens (Human).